A 400-amino-acid polypeptide reads, in one-letter code: Spaetzle-processing enzyme (400 aa).

A signal peptide spans 1–27 (MASTERNFLLLSLVVSALSGLVHRSDA). A Clip domain is found at 34–94 (SCTPQQSDER…GLVNRILVCC (61 aa)). Intrachain disulfides connect C35–C93, C46–C77, C52–C94, C127–C269, C166–C182, and C211–C221. The region spanning 135–399 (IFGGTNTTLW…FIDWIKQKLE (265 aa)) is the Peptidase S1 domain. N-linked (GlcNAc...) asparagine glycosylation is present at N140. The Charge relay system role is filled by H181. Ca(2+) is bound by residues E202, D204, T207, and D210. Residue D249 is the Charge relay system of the active site. N311 is a glycosylation site (N-linked (GlcNAc...) asparagine). 2 disulfide bridges follow: C315/C332 and C342/C375. S346 (charge relay system) is an active-site residue.

The protein belongs to the peptidase S1 family. CLIP subfamily. As to quaternary structure, in the active form, heterodimer of a light chain and a heavy chain; disulfide-linked. Post-translationally, proteolytically cleaved in response to Gram-negative bacterial or fungal infection; processing is likely to result in its activation. Cleavage produces a light chain containing the CLIP domain and a catalytic heavy chain which remain covalently associated through an interchain disulfide bond.

It localises to the secreted. Functionally, endopeptidase which plays a key role in innate immunity by cleaving Tl ligand spz and thereby activating the Toll pathway in response to fungal and Gram-positive bacterial infections. Acts downstream of pathogen recognition receptors PGRP-SA and GNBP1 and protease grass in response to Gram-positive bacterial infection. Acts downstream of protease psh in response to fungal infection. The polypeptide is Spaetzle-processing enzyme (Drosophila melanogaster (Fruit fly)).